Here is a 259-residue protein sequence, read N- to C-terminus: Diphthine synthase (259 aa).

S-adenosyl-L-methionine-binding positions include Leu-9, Asp-85, Val-88, 113–114 (TA), Leu-168, Ala-209, and His-234.

The protein belongs to the diphthine synthase family. Homodimer.

It catalyses the reaction 2-[(3S)-amino-3-carboxypropyl]-L-histidyl-[translation elongation factor 2] + 3 S-adenosyl-L-methionine = diphthine-[translation elongation factor 2] + 3 S-adenosyl-L-homocysteine + 3 H(+). Its pathway is protein modification; peptidyl-diphthamide biosynthesis. In terms of biological role, S-adenosyl-L-methionine-dependent methyltransferase that catalyzes the trimethylation of the amino group of the modified target histidine residue in translation elongation factor 2 (EF-2), to form an intermediate called diphthine. The three successive methylation reactions represent the second step of diphthamide biosynthesis. In Haloarcula marismortui (strain ATCC 43049 / DSM 3752 / JCM 8966 / VKM B-1809) (Halobacterium marismortui), this protein is Diphthine synthase.